Reading from the N-terminus, the 100-residue chain is Small ribosomal subunit protein uS14c (100 aa).

Belongs to the universal ribosomal protein uS14 family. Part of the 30S ribosomal subunit.

It localises to the plastid. Its subcellular location is the chloroplast. Binds 16S rRNA, required for the assembly of 30S particles. This Anthoceros angustus (Hornwort) protein is Small ribosomal subunit protein uS14c.